The following is a 626-amino-acid chain: Acetolactate synthase large subunit (626 aa).

Positions 1–13 (MNVAASQQPTPAT) are enriched in polar residues. A disordered region spans residues 1–23 (MNVAASQQPTPATVASRGRSAAP). Residue Glu-73 participates in thiamine diphosphate binding. FAD contacts are provided by residues Arg-175, 281 to 302 (HGTVSAVGALQRSDLLIAIGSR), and 324 to 343 (DIDPAEIGKIKQVEVPIVGD). Residues 416 to 496 (QHQMWAAQFV…IKIALINNGN (81 aa)) are thiamine pyrophosphate binding. Mg(2+)-binding residues include Asp-467 and Asn-494.

It belongs to the TPP enzyme family. Dimer of large and small chains. It depends on Mg(2+) as a cofactor. Thiamine diphosphate serves as cofactor.

It carries out the reaction 2 pyruvate + H(+) = (2S)-2-acetolactate + CO2. It participates in amino-acid biosynthesis; L-isoleucine biosynthesis; L-isoleucine from 2-oxobutanoate: step 1/4. The protein operates within amino-acid biosynthesis; L-valine biosynthesis; L-valine from pyruvate: step 1/4. The sequence is that of Acetolactate synthase large subunit (ilvB) from Corynebacterium glutamicum (strain ATCC 13032 / DSM 20300 / JCM 1318 / BCRC 11384 / CCUG 27702 / LMG 3730 / NBRC 12168 / NCIMB 10025 / NRRL B-2784 / 534).